The chain runs to 87 residues: Putative membrane protein insertion efficiency factor (87 aa).

The protein belongs to the UPF0161 family.

The protein localises to the cell membrane. In terms of biological role, could be involved in insertion of integral membrane proteins into the membrane. The chain is Putative membrane protein insertion efficiency factor from Ligilactobacillus salivarius (strain UCC118) (Lactobacillus salivarius).